The following is a 352-amino-acid chain: Chalcone synthase C (352 aa).

C170 is a catalytic residue.

Belongs to the thiolase-like superfamily. Chalcone/stilbene synthases family.

It carries out the reaction (E)-4-coumaroyl-CoA + 3 malonyl-CoA + 3 H(+) = 2',4,4',6'-tetrahydroxychalcone + 3 CO2 + 4 CoA. It functions in the pathway secondary metabolite biosynthesis; flavonoid biosynthesis. The primary product of this enzyme is 4,2',4',6'-tetrahydroxychalcone (also termed naringenin-chalcone or chalcone) which can under specific conditions spontaneously isomerize into naringenin. The chain is Chalcone synthase C (CHSC) from Ipomoea purpurea (Common morning glory).